We begin with the raw amino-acid sequence, 746 residues long: Rhizobactin receptor (746 aa).

An N-terminal signal peptide occupies residues 1-26 (MGNNENGGISFCVFVVVIGFGTGAVA). A TonB box motif is present at residues 40-47 (EEIVVTGG). Residues 52–163 (QISEIARTIY…TGGIINIITK (112 aa)) form the TBDR plug domain. A TBDR beta-barrel domain is found at 169–746 (EPGLHAEVTG…TFAVSLTKVF (578 aa)). Residues 729–746 (FDYKGRGRTFAVSLTKVF) carry the TonB C-terminal box motif.

It belongs to the TonB-dependent receptor family.

The protein localises to the cell outer membrane. Its function is as follows. Receptor for the siderophore rhizobactin. The protein is Rhizobactin receptor (rhtA) of Rhizobium meliloti (strain 1021) (Ensifer meliloti).